Consider the following 312-residue polypeptide: Glycine--tRNA ligase alpha subunit (312 aa).

The protein belongs to the class-II aminoacyl-tRNA synthetase family. In terms of assembly, tetramer of two alpha and two beta subunits.

It localises to the cytoplasm. The enzyme catalyses tRNA(Gly) + glycine + ATP = glycyl-tRNA(Gly) + AMP + diphosphate. This chain is Glycine--tRNA ligase alpha subunit, found in Delftia acidovorans (strain DSM 14801 / SPH-1).